The sequence spans 204 residues: Somatotropin (204 aa).

The N-terminal stretch at 1 to 17 is a signal peptide; it reads MDRVILLLSVVSLGVSS. Gln-18 carries the post-translational modification Pyrrolidone carboxylic acid. His-36 is a binding site for Zn(2+). Cysteines 69 and 177 form a disulfide. Glu-186 is a binding site for Zn(2+). A disulfide bond links Cys-194 and Cys-202.

It belongs to the somatotropin/prolactin family.

It is found in the secreted. Its function is as follows. Growth hormone plays an important role in growth control and is involved in the regulation of several anabolic processes. Implicated as an osmoregulatory substance important for seawater adaptation. This chain is Somatotropin (gh), found in Sebastes schlegelii (Korean rockfish).